A 302-amino-acid chain; its full sequence is Ventral anterior homeobox 2a (302 aa).

Disordered regions lie at residues 1–35, 50–73, 156–175, 199–223, and 282–302; these read MFDQ…RDKG, KDIP…SQST, RRTK…SSST, PPNL…LGTS, and AFEP…KSTS. The segment at residues 105 to 164 is a DNA-binding region (homeobox); sequence PKRTRTSFTAEQLYRLELEFQRCQYVVGRERTELARQLNLSETQVKVWFQNRRTKQKKDQ. The segment covering 161-172 has biased composition (basic and acidic residues); sequence KKDQSRDSEKRS. Residues 204–223 are compositionally biased toward low complexity; it reads SSSQNNMGTSSGNGTNLGTS. The segment covering 287-296 has biased composition (basic and acidic residues); the sequence is TRLDRKDTAS.

The protein belongs to the EMX homeobox family.

Its subcellular location is the nucleus. Functionally, transcription factor that may function in dorsoventral specification of the forebrain. Regulates the expression of Wnt signaling antagonists including the expression of a truncated tcf7l2 isoform that cannot bind ctnnb1 and acts therefore as a potent dominant-negative Wnt antagonist. Plays a crucial role in eye development and, in particular, in the specification of the ventral optic vesicle. May be a regulator of axial polarization in the retina. The protein is Ventral anterior homeobox 2a (vax2-a) of Xenopus laevis (African clawed frog).